The sequence spans 555 residues: Benzoyl-CoA-dihydrodiol lyase (555 aa).

Belongs to the benzoyl-CoA oxygenase component C family. As to quaternary structure, homodimer.

The catalysed reaction is 2,3-epoxy-2,3-dihydrobenzoyl-CoA + 2 H2O = (3Z)-6-oxohex-3-enoyl-CoA + formate + H(+). Its function is as follows. Catalyzes the ring opening of 2,3-epoxy-2,3-dihydroxybenzoyl-CoA to form 3,4-didehydroadipyl-CoA semialdehyde. The polypeptide is Benzoyl-CoA-dihydrodiol lyase (boxC) (Aromatoleum evansii (Azoarcus evansii)).